A 254-amino-acid polypeptide reads, in one-letter code: 3-deoxy-manno-octulosonate cytidylyltransferase (254 aa).

This sequence belongs to the KdsB family.

It localises to the cytoplasm. The enzyme catalyses 3-deoxy-alpha-D-manno-oct-2-ulosonate + CTP = CMP-3-deoxy-beta-D-manno-octulosonate + diphosphate. It functions in the pathway nucleotide-sugar biosynthesis; CMP-3-deoxy-D-manno-octulosonate biosynthesis; CMP-3-deoxy-D-manno-octulosonate from 3-deoxy-D-manno-octulosonate and CTP: step 1/1. The protein operates within bacterial outer membrane biogenesis; lipopolysaccharide biosynthesis. Functionally, activates KDO (a required 8-carbon sugar) for incorporation into bacterial lipopolysaccharide in Gram-negative bacteria. The polypeptide is 3-deoxy-manno-octulosonate cytidylyltransferase (Ectopseudomonas mendocina (strain ymp) (Pseudomonas mendocina)).